The following is a 495-amino-acid chain: Acetyl-coenzyme A carboxylase carboxyl transferase subunit beta, chloroplastic (495 aa).

The interval 187–208 (ESRNSSENEGSSRRTRTKGSDL) is disordered. The CoA carboxyltransferase N-terminal domain maps to 226–495 (LWVQCENCYG…PLNQKSSKIK (270 aa)). Zn(2+)-binding residues include C230, C233, C249, and C252. The C4-type zinc-finger motif lies at 230-252 (CENCYGLNYKKFLKSKMNICEQC).

Belongs to the AccD/PCCB family. In terms of assembly, acetyl-CoA carboxylase is a heterohexamer composed of biotin carboxyl carrier protein, biotin carboxylase and 2 subunits each of ACCase subunit alpha and ACCase plastid-coded subunit beta (accD). It depends on Zn(2+) as a cofactor. RNA expressed in leaf, root and stem; the least expression occurs in stems.

The protein resides in the plastid. It is found in the chloroplast stroma. It carries out the reaction N(6)-carboxybiotinyl-L-lysyl-[protein] + acetyl-CoA = N(6)-biotinyl-L-lysyl-[protein] + malonyl-CoA. Its pathway is lipid metabolism; malonyl-CoA biosynthesis; malonyl-CoA from acetyl-CoA: step 1/1. Component of the acetyl coenzyme A carboxylase (ACC) complex. Biotin carboxylase (BC) catalyzes the carboxylation of biotin on its carrier protein (BCCP) and then the CO(2) group is transferred by the transcarboxylase to acetyl-CoA to form malonyl-CoA. The chain is Acetyl-coenzyme A carboxylase carboxyl transferase subunit beta, chloroplastic from Nicotiana tabacum (Common tobacco).